The primary structure comprises 450 residues: MDARSPDLTTDAAGWRTDVPTTKSLAEVNASVALPTAGVWWRRLLAFVGPGYLVSVGYMDPGNWATDLAGGSKFGYTLLSVILLSNLMAILLQSLAARLGIVTDRDLAQACRATYSPAVNFLLWLACEAAIIACDLAEVIGTAIALKLLFGIPLIGGALIAALDAFLLLLLMNRGFRFLEAFVIALLAVIAVCFAVQIVAAAPPVAEVLHGFMPKSEIFTNPEMLYIAIGIIGATVMPHNLYLHSSIVQTRAYERNETGRREAIKWATTDSTIALMLALFINAAILVVAAATFHKSGHSDVAEIGQAFELLSPLLGLGIASTLFAIALLASGLNSTVTATLAGQIVMEGFLDLRLPSWARRLLTRGIAIIPVIIVTAIYGERGTADLLVFSQVVLSMQLPFAVIPLVRFVSDRRKMGKFAISPYVAAIAWIVAGVIVVLNLKLLADTLLG.

Helical transmembrane passes span 44–64 (LLAF…PGNW), 77–97 (TLLS…SLAA), 121–141 (FLLW…EVIG), 152–172 (IPLI…LLLM), 181–201 (AFVI…IVAA), 218–238 (IFTN…TVMP), 273–293 (IALM…AATF), 310–330 (LLSP…ALLA), 366–386 (GIAI…GTAD), 387–407 (LLVF…IPLV), and 419–439 (FAIS…IVVL).

Belongs to the NRAMP family.

The protein resides in the cell inner membrane. H(+)-stimulated, divalent metal cation uptake system. This chain is Divalent metal cation transporter MntH, found in Bradyrhizobium diazoefficiens (strain JCM 10833 / BCRC 13528 / IAM 13628 / NBRC 14792 / USDA 110).